Here is a 145-residue protein sequence, read N- to C-terminus: Lymphocyte antigen 6 complex locus protein G5c (145 aa).

The signal sequence occupies residues 1–38 (MSGLAASWSLKPLGPHGVTQALCAVLLAVLVTMNVVLG). The UPAR/Ly6 domain maps to 55–145 (LHCYRCLLET…NPKNRKNTMH (91 aa)). 5 disulfides stabilise this stretch: C57–C84, C60–C69, C76–C102, C111–C128, and C129–C134. N91 carries N-linked (GlcNAc...) asparagine glycosylation.

Forms oligomers. In terms of processing, N-glycosylated. In terms of tissue distribution, expression restricted to the caput of epididymis. Detected only from day 24 postnatum.

It localises to the secreted. Functionally, may have a role in hematopoietic cell differentiation. The protein is Lymphocyte antigen 6 complex locus protein G5c (Ly6g5c) of Rattus norvegicus (Rat).